Consider the following 447-residue polypeptide: Alpha-1,3-mannosyl-glycoprotein 2-beta-N-acetylglucosaminyltransferase (447 aa).

Topologically, residues 1 to 6 are cytoplasmic; it reads MLKKQS. The helical; Signal-anchor for type II membrane protein transmembrane segment at 7 to 29 threads the bilayer; sequence AGLVLWGAILFVAWNALLLLFFW. The Lumenal portion of the chain corresponds to 30 to 447; sequence TRPVPSRLPS…TWDGYDPSWT (418 aa). A disulfide bridge links cysteine 115 with cysteine 145. Residues arginine 117, aspartate 144, histidine 190, and aspartate 212 each coordinate substrate. Residue aspartate 213 coordinates Mn(2+). A disulfide bridge connects residues cysteine 239 and cysteine 305. Residue aspartate 291 is the Proton acceptor of the active site. Position 322 (serine 322) interacts with substrate.

This sequence belongs to the glycosyltransferase 13 family. As to quaternary structure, interacts with MGAT4D. Interacts with BRI3. Mn(2+) serves as cofactor.

The protein localises to the golgi apparatus membrane. It localises to the cytoplasm. It is found in the perinuclear region. It catalyses the reaction N(4)-(alpha-D-Man-(1-&gt;3)-[alpha-D-Man-(1-&gt;3)-[alpha-D-Man-(1-&gt;6)]-alpha-D-Man-(1-&gt;6)]-beta-D-Man-(1-&gt;4)-beta-D-GlcNAc-(1-&gt;4)-beta-D-GlcNAc)-L-asparaginyl-[protein] (N-glucan mannose isomer 5A1,2) + UDP-N-acetyl-alpha-D-glucosamine = N(4)-{beta-D-GlcNAc-(1-&gt;2)-alpha-D-Man-(1-&gt;3)-[alpha-D-Man-(1-&gt;3)-[alpha-D-Man-(1-&gt;6)]-alpha-D-Man-(1-&gt;6)]-beta-D-Man-(1-&gt;4)-beta-D-GlcNAc-(1-&gt;4)-beta-D-GlcNAc}-L-asparaginyl-[protein] + UDP + H(+). Its pathway is protein modification; protein glycosylation. Its function is as follows. Initiates complex N-linked carbohydrate formation. Essential for the conversion of high-mannose to hybrid and complex N-glycans. The protein is Alpha-1,3-mannosyl-glycoprotein 2-beta-N-acetylglucosaminyltransferase (MGAT1) of Oryctolagus cuniculus (Rabbit).